Here is a 742-residue protein sequence, read N- to C-terminus: CD44 antigen (742 aa).

An N-terminal signal peptide occupies residues 1–20; it reads MDKFWWHAAWGLCLVPLSLA. Residues 21 to 649 are Extracellular-facing; it reads QIDLNITCRF…GPIRTPQIPE (629 aa). N-linked (GlcNAc...) asparagine glycosylation is present at asparagine 25. 3 cysteine pairs are disulfide-bonded: cysteine 28–cysteine 129, cysteine 53–cysteine 118, and cysteine 77–cysteine 97. Residues 32 to 120 form the Link domain; sequence GVFHVEKNGR…TSQYDTYCFN (89 aa). Arginine 41 is a binding site for hyaluronan. Asparagine 57 carries N-linked (GlcNAc...) asparagine glycosylation. The hyaluronan site is built by arginine 78 and tyrosine 79. Asparagine 100 carries N-linked (GlcNAc...) asparagine glycosylation. Tyrosine 105 lines the hyaluronan pocket. N-linked (GlcNAc...) asparagine glycans are attached at residues asparagine 110 and asparagine 120. 2 disordered regions span residues 160 to 189 and 261 to 285; these read EYRT…RSST and TTQM…NEDE. Residues 179–189 show a composition bias toward low complexity; it reads SSGSSSERSST. An O-linked (Xyl...) (chondroitin sulfate) serine glycan is attached at serine 180. The segment at 224–649 is stem; it reads LMSTSATATE…GPIRTPQIPE (426 aa). The span at 261–273 shows a compositional bias: polar residues; sequence TTQMAGTSSNTIS. Asparagine 350 is a glycosylation site (N-linked (GlcNAc...) asparagine). Disordered stretches follow at residues 372-558 and 590-642; these read HHEE…TLLE and TVGD…SGPI. The span at 386–396 shows a compositional bias: low complexity; sequence QATPSSTTEET. A compositionally biased stretch (basic and acidic residues) spans 407–421; sequence RWHEGYRQTPKEDSH. The segment covering 422–435 has biased composition (low complexity); it reads STTGTAAASAHTSH. Polar residues-rich tracts occupy residues 439–452 and 476–489; these read GRTT…SWTD and SHSI…NPNT. The segment covering 502–516 has biased composition (low complexity); sequence SMTTQQSNSQSFSTS. Positions 528 to 539 are enriched in polar residues; the sequence is TTSTLTSSNRND. Asparagine 548 and asparagine 599 each carry an N-linked (GlcNAc...) asparagine glycan. Over residues 592–606 the composition is skewed to polar residues; that stretch reads GDSNSNVNRSLSGDQ. Over residues 619 to 629 the composition is skewed to basic and acidic residues; it reads HGSESDGHSHG. Residue asparagine 636 is glycosylated (N-linked (GlcNAc...) asparagine). Residues 650 to 670 form a helical membrane-spanning segment; that stretch reads WLIILASLLALALILAVCIAV. The Cytoplasmic segment spans residues 671–742; sequence NSRRRCGQKK…LQNVDMKIGV (72 aa). The residue at position 672 (serine 672) is a Phosphoserine; by PKC. The required for interaction with EZR, MSN and RDX and for co-localization to microvilli stretch occupies residues 673–691; sequence RRRCGQKKKLVINSGNGAV. Residues serine 686, serine 697, and serine 706 each carry the phosphoserine modification.

In terms of assembly, interacts with PKN2. Interacts with TIAM1 and TIAM2. Interacts with HA, as well as other glycosaminoglycans, collagen, laminin, and fibronectin via its N-terminal segment. Interacts with UNC119. Interacts with PDPN (via extracellular domain); this interaction is required for PDPN-mediated directional migration and regulation of lamellipodia extension/stabilization during cell spreading and migration. Interacts with RDX, EZR and MSN. Interacts with EGFR. Interacts with CD74; this complex is essential for the MIF-induced signaling cascade that results in B cell survival. Post-translationally, proteolytically cleaved in the extracellular matrix by specific proteinases (possibly MMPs) in several cell lines and tumors. In terms of processing, N-glycosylated. O-glycosylated; contains chondroitin sulfate glycans which can be more or less sulfated and whose number may affect the accessibility of specific proteinases to their cleavage site(s). It is uncertain if O-glycosylation occurs on Thr-637 or Thr-638. Post-translationally, phosphorylated; activation of PKC results in the dephosphorylation of Ser-706 (constitutive phosphorylation site), and the phosphorylation of Ser-672. As to expression, detected in fibroblasts and urine (at protein level). Detected in placenta (at protein level). Isoform 10 (epithelial isoform) is expressed by cells of epithelium and highly expressed by carcinomas. Expression is repressed in neuroblastoma cells.

It is found in the cell membrane. Its subcellular location is the cell projection. The protein resides in the microvillus. The protein localises to the secreted. In terms of biological role, cell-surface receptor that plays a role in cell-cell interactions, cell adhesion and migration, helping them to sense and respond to changes in the tissue microenvironment. Participates thereby in a wide variety of cellular functions including the activation, recirculation and homing of T-lymphocytes, hematopoiesis, inflammation and response to bacterial infection. Engages, through its ectodomain, extracellular matrix components such as hyaluronan/HA, collagen, growth factors, cytokines or proteases and serves as a platform for signal transduction by assembling, via its cytoplasmic domain, protein complexes containing receptor kinases and membrane proteases. Such effectors include PKN2, the RhoGTPases RAC1 and RHOA, Rho-kinases and phospholipase C that coordinate signaling pathways promoting calcium mobilization and actin-mediated cytoskeleton reorganization essential for cell migration and adhesion. The protein is CD44 antigen (CD44) of Homo sapiens (Human).